The following is a 535-amino-acid chain: T-complex protein 1 subunit beta (535 aa).

Methionine 1 bears the N-acetylmethionine mark. Alanine 2 is modified (N-acetylalanine). Serine 3 is subject to Phosphoserine. An N6-acetyllysine modification is found at lysine 13. Position 44 (glycine 44) interacts with ADP. Glycine 44 contacts ATP. Serine 60 bears the Phosphoserine mark. Aspartate 97 lines the Mg(2+) pocket. ADP-binding residues include glycine 98, threonine 99, threonine 100, and serine 101. ATP-binding residues include glycine 98, threonine 99, and threonine 100. The residue at position 154 (lysine 154) is an N6-acetyllysine. The ADP site is built by serine 168 and serine 169. Lysine 181 carries the N6-acetyllysine modification. Lysine 248 is covalently cross-linked (Glycyl lysine isopeptide (Lys-Gly) (interchain with G-Cter in SUMO2)). Serine 260 carries the post-translational modification Phosphoserine. Threonine 261 is subject to Phosphothreonine. ADP-binding residues include glycine 410, glutamate 495, and lysine 500. ATP is bound by residues glutamate 495 and lysine 500.

It belongs to the TCP-1 chaperonin family. In terms of assembly, component of the chaperonin-containing T-complex (TRiC), a hexadecamer composed of two identical back-to-back stacked rings enclosing a protein folding chamber. Each ring is made up of eight different subunits: TCP1/CCT1, CCT2, CCT3, CCT4, CCT5, CCT6A/CCT6, CCT7, CCT8. Interacts with PACRG. Interacts with FLCN. Interacts with DLEC1. Interacts with SVEP1.

The protein resides in the cytoplasm. The enzyme catalyses ATP + H2O = ADP + phosphate + H(+). Its function is as follows. Component of the chaperonin-containing T-complex (TRiC), a molecular chaperone complex that assists the folding of actin, tubulin and other proteins upon ATP hydrolysis. The TRiC complex mediates the folding of WRAP53/TCAB1, thereby regulating telomere maintenance. As part of the TRiC complex may play a role in the assembly of BBSome, a complex involved in ciliogenesis regulating transports vesicles to the cilia. The protein is T-complex protein 1 subunit beta of Homo sapiens (Human).